Consider the following 349-residue polypeptide: Core protein VP7 (349 aa).

Asparagine 45 carries N-linked (GlcNAc...) asparagine; by host glycosylation.

It belongs to the orbivirus VP7 family. In terms of assembly, homotrimer.

Its subcellular location is the virion. Its function is as follows. Major structural core protein; binds to structural protein VP3. Constitutes the surface of the AHSV core. The protein is Core protein VP7 (Segment-7) of African horse sickness virus 6 (AHSV-6).